Reading from the N-terminus, the 260-residue chain is MRAPLWLRDLAGAWIFYSVLPAWPGLKPRFERIARFAPWIGLVLGGLQSFLWLVLIRADWPTSAVALLVIGLGAWLSGGLHLDGLMDTADGLAAGRERCLQAMDDSCVGASGVQALLVVVLLQIAALLRLGSLAPLALLIAAFWGRCAPLWAMARFFYLREGQAGSASFHRRYRQGWQEALPAFLVLLLALTVVPLLMIVGWPSQMVLMAGIGVGVLPAFLVPELLGRRLGGHSGDSYGASVVLVETITLLLLAVLLTAG.

Helical transmembrane passes span 3–23 (APLW…LPAW), 36–56 (FAPW…LVLI), 60–80 (WPTS…SGGL), 108–128 (VGAS…AALL), 133–153 (LAPL…LWAM), 180–200 (ALPA…LMIV), 206–226 (MVLM…PELL), and 239–259 (GASV…LLTA).

The protein belongs to the CobS family. Mg(2+) is required as a cofactor.

It localises to the cell inner membrane. The catalysed reaction is alpha-ribazole + adenosylcob(III)inamide-GDP = adenosylcob(III)alamin + GMP + H(+). The enzyme catalyses alpha-ribazole 5'-phosphate + adenosylcob(III)inamide-GDP = adenosylcob(III)alamin 5'-phosphate + GMP + H(+). It participates in cofactor biosynthesis; adenosylcobalamin biosynthesis; adenosylcobalamin from cob(II)yrinate a,c-diamide: step 7/7. Its function is as follows. Joins adenosylcobinamide-GDP and alpha-ribazole to generate adenosylcobalamin (Ado-cobalamin). Also synthesizes adenosylcobalamin 5'-phosphate from adenosylcobinamide-GDP and alpha-ribazole 5'-phosphate. The chain is Adenosylcobinamide-GDP ribazoletransferase from Prochlorococcus marinus (strain MIT 9303).